The sequence spans 103 residues: MITKDKIRVRLFSFDVKILDQSAESIVRAVQKSKTQIKGPIPLPTKIKKYTVLRSPHVNKKSREQFEMRTHKRLIDILEPTSALMDSLMKLELPAGVEVDIKQ.

The protein belongs to the universal ribosomal protein uS10 family. In terms of assembly, part of the 30S ribosomal subunit.

Involved in the binding of tRNA to the ribosomes. The protein is Small ribosomal subunit protein uS10 of Borrelia recurrentis (strain A1).